The primary structure comprises 1856 residues: Autophagy-related protein 2 (1856 aa).

Disordered regions lie at residues 123 to 167 (NTND…TGNK), 229 to 283 (LRTL…GNES), 309 to 328 (KSAA…DKED), 395 to 428 (TKSR…DASH), 1157 to 1177 (LNGT…SSLM), 1614 to 1647 (MLGG…VEVA), and 1719 to 1741 (KLQP…EDED). Residues 137-147 (ASEDDDEDDID) are compositionally biased toward acidic residues. The segment covering 250 to 262 (KKQQGSDNDSPTD) has biased composition (polar residues). The span at 270-280 (NDNDDDDDDYG) shows a compositional bias: acidic residues. Over residues 412–424 (DNDEIPEDQSESD) the composition is skewed to acidic residues. A compositionally biased stretch (low complexity) spans 1157–1170 (LNGTENGSTSESSS). The span at 1621-1639 (SVRSPNLGGSDNRRNSNAS) shows a compositional bias: polar residues. Acidic residues predominate over residues 1732–1741 (TEEEEDEDED).

This sequence belongs to the ATG2 family.

It localises to the preautophagosomal structure membrane. The protein resides in the endoplasmic reticulum membrane. It catalyses the reaction a 1,2-diacyl-sn-glycero-3-phosphocholine(in) = a 1,2-diacyl-sn-glycero-3-phosphocholine(out). The catalysed reaction is a 1,2-diacyl-sn-glycero-3-phospho-L-serine(in) = a 1,2-diacyl-sn-glycero-3-phospho-L-serine(out). The enzyme catalyses a 1,2-diacyl-sn-glycero-3-phosphoethanolamine(in) = a 1,2-diacyl-sn-glycero-3-phosphoethanolamine(out). In terms of biological role, lipid transfer protein required for autophagosome completion and peroxisome degradation. Tethers the edge of the isolation membrane (IM) to the endoplasmic reticulum (ER) and mediates direct lipid transfer from ER to IM for IM expansion. ATG2/SPO72 binds to the ER exit site (ERES), which is the membrane source for autophagosome formation, using basic residues in its N-terminal region (NR) and to the expanding edge of the IM through its C-terminal region. The latter binding is assisted by an ATG18-PtdIns3P interaction. ATG2/SPO72 then extracts phospholipids from the membrane source using its NR and transfers them to ATG9 to the IM through its predicted beta-sheet-rich structure for membrane expansion. The polypeptide is Autophagy-related protein 2 (SPO72) (Candida albicans (strain SC5314 / ATCC MYA-2876) (Yeast)).